The sequence spans 204 residues: Ribosome maturation factor RimP (204 aa).

The segment at 176–204 (GNFDESQFDEIEESEGEEADEAEQPPTKH) is disordered. Positions 181–198 (SQFDEIEESEGEEADEAE) are enriched in acidic residues.

It belongs to the RimP family.

The protein localises to the cytoplasm. Its function is as follows. Required for maturation of 30S ribosomal subunits. This is Ribosome maturation factor RimP from Cereibacter sphaeroides (strain KD131 / KCTC 12085) (Rhodobacter sphaeroides).